The following is an 810-amino-acid chain: Glycerol-3-phosphate acyltransferase (810 aa).

The HXXXXD motif motif lies at 305 to 310; it reads CHRSHI.

It belongs to the GPAT/DAPAT family.

It localises to the cell inner membrane. The catalysed reaction is sn-glycerol 3-phosphate + an acyl-CoA = a 1-acyl-sn-glycero-3-phosphate + CoA. It participates in phospholipid metabolism; CDP-diacylglycerol biosynthesis; CDP-diacylglycerol from sn-glycerol 3-phosphate: step 1/3. The sequence is that of Glycerol-3-phosphate acyltransferase from Haemophilus influenzae (strain 86-028NP).